Reading from the N-terminus, the 419-residue chain is Queuine tRNA-ribosyltransferase accessory subunit 2 (419 aa).

Cys326, Cys328, Cys331, and His357 together coordinate Zn(2+).

It belongs to the queuine tRNA-ribosyltransferase family. QTRT2 subfamily. In terms of assembly, heterodimer of a catalytic subunit and an accessory subunit. Zn(2+) serves as cofactor.

It localises to the cytoplasm. Its function is as follows. Non-catalytic subunit of the queuine tRNA-ribosyltransferase (TGT) that catalyzes the base-exchange of a guanine (G) residue with queuine (Q) at position 34 (anticodon wobble position) in tRNAs with GU(N) anticodons (tRNA-Asp, -Asn, -His and -Tyr), resulting in the hypermodified nucleoside queuosine (7-(((4,5-cis-dihydroxy-2-cyclopenten-1-yl)amino)methyl)-7-deazaguanosine). This is Queuine tRNA-ribosyltransferase accessory subunit 2 from Drosophila grimshawi (Hawaiian fruit fly).